The sequence spans 278 residues: Protein canopy homolog 3 (278 aa).

Residues 1–30 (MDSMPEPASRCLLLLPLLLLLLLLLPAPEL) form the signal peptide. Residues 47–271 (SKCEVCKYVA…EGIQKASPLT (225 aa)) form the Saposin B-type domain. Intrachain disulfides connect Cys-49/Cys-206, Cys-52/Cys-194, and Cys-104/Cys-166. N-linked (GlcNAc...) asparagine glycosylation is present at Asn-153. A coiled-coil region spans residues 153–179 (NETSAEVADLKKQCDVLVEEFEEVIED). Residues 215–278 (KGDTAALGGK…PLTHSPPDEL (64 aa)) form a disordered region. A compositionally biased stretch (low complexity) spans 233–243 (AKAAGGRSSSS).

The protein belongs to the canopy family. As to quaternary structure, interacts with HSP90B1; this interaction is disrupted in the presence of ATP. Interacts with TLR1, TLR2, TLR4 and TLR9. Strongest interaction with TLR4.

The protein localises to the endoplasmic reticulum. Its function is as follows. Toll-like receptor (TLR)-specific co-chaperone for HSP90B1. Required for proper TLR folding, except that of TLR3, and hence controls TLR exit from the endoplasmic reticulum. Consequently, required for both innate and adaptive immune responses. This chain is Protein canopy homolog 3 (CNPY3), found in Homo sapiens (Human).